Consider the following 32-residue polypeptide: Acatoxin 1 (32 aa).

Cystine bridges form between Cys-1/Cys-15, Cys-8/Cys-20, and Cys-14/Cys-26.

It is found in the secreted. It localises to the nematocyst. In terms of biological role, reversibly inhibits acid-sensing ion channels (ASIC) in rat dorsal root ganglia neurons. Reversibly inhibits voltage-gated potassium channels (Kv) in rat DRG neurons. This is Acatoxin 1 from Anthopleura cascaia (Sea anemone).